The following is a 1421-amino-acid chain: Cytoadherence-linked asexual protein 3.2 (1421 aa).

The first 24 residues, 1 to 24, serve as a signal peptide directing secretion; sequence MVSFFKTPIIIFFFLLCLNEKVLC. 4 disulfide bridges follow: cysteine 335–cysteine 363, cysteine 409–cysteine 415, cysteine 519–cysteine 547, and cysteine 523–cysteine 544. The helical transmembrane segment at 1203-1223 threads the bilayer; it reads NFFMELANGFMYAFCFFAISQ. Cysteine 1352 and cysteine 1355 are disulfide-bonded. The interval 1371 to 1413 is disordered; that stretch reads GDKNTNETTEIKKQTSTYIDTEKMNEADSADSDDEKDFDTPDN. Positions 1398–1412 are enriched in acidic residues; it reads DSADSDDEKDFDTPD.

In terms of assembly, component of the RhopH complex. RhopH complex is at least composed of CLAG3.1/CLAG3.2, RhopH2 and RhopH3 with a 1:1:1 subunit stoichiometry. CLAG3.1/CLAG3.2 mediates subunit association through independent contacts with RhopH2 and RhopH3, which do not directly interact with one another. Interacts with RhopH2. Interacts with RhopH3.

The protein resides in the host cell membrane. The protein localises to the parasitophorous vacuole membrane. It is found in the host cytoplasm. It localises to the cytoplasmic vesicle. Its subcellular location is the secretory vesicle. The protein resides in the rhoptry. Its function is as follows. Participates in the formation of new permeability pathways in Plasmodium-infected erythrocytes enabling the uptake of nutrients from the blood plasma. This is Cytoadherence-linked asexual protein 3.2 from Plasmodium falciparum.